Consider the following 3412-residue polypeptide: MSGRKAQGKTLGVNMVRRGVRSLSNKIKQKTKQIGNRPGPSRGVQGFIFFFLFNILTGKKLTAHLKKLWRMLDPRQGLAVLRKVKRVVASLMRGLSSRKRRSNEMALFPLLLLGLLALSGGVTLVRKNRWLLLNVTAEDLGKTFSVGTGNCTTNILEAKYWCPDSMEYNCPNLSPREEPDDIDCWCYGVENVRVAYGRCDAVGRSKRSRRAIDLPTHENHGLKTRQEKWMTGRMGERQLQKIERWLVRNPFFAVTALAIAYLVGNNTTQRVVIALLVLAVGPAYSAHCIGITDRDFIEGVHGGTWVSATLEQDKCVTVMAPDKPSLDISLQTVAIDGPAEARKVCYSAVLTHVKINDKCPSTGEAHLAEENDGDNACKRTYSDRGWGNGCGLFGKGSIVACAKFTCAKSMSLFEVDQTKIQYVIRAQLHVGAKQENWNTDIKTLKFDALSGSQEAEFTGYGKATLECQVQTAVDFGNSYIAEMEKDSWIVDRQWAQDLTLPWQSGSGGIWREMHHLVEFEPPHAATIRVLALGNQEGSLKTALTGAMRVTKDENDNNLYKLHGGHVSCRVKLSALTLKGTSYKMCTDKMSFVKNPTDTGHGTVVMQVKVPKGAPCKIPVIVADDLTAAVNKGILVTVNPIASTNDDEVLIEVNPPFGDSYIIVGTGDSRLTYQWHKEGSSIGKLFTQTMKGAERLAVMGDAAWDFSSAGGFFTSVGKGIHTVFGSAFQGLFGGLSWITKVIMGAVLIWVGINTRNMTMSMSMILVGVIMMFLSLGVGADQGCAVNFGKRELKCGDGIFVFRDSDDWLTKYSYYPEDPVKLASIIKASHEEGKCGLNSVDSLEHEMWRSRADEINAIFEENEVDISVVVQDPKNIYQRGTHPFSRIRDGLQYGWKTWGKNLVFSPGRKNGSFIIDGKSRKECPFSNRVWNSFQIEEFGMGVFTTRVFMDATFDYSVDCDGAILGAAVNGKKSAHGSPTFWMGSHEVNGTWMIHTLETLDYKECEWPLTHTIGTSVEESDMFMPRSIGGPVSSHNRIPGYKVQTNGPWMQVPLEVKREVCPGTSVVVDSNCDGRGKSTRSTTDSGKIIPEWCCRSCTMPPVSFHGSDGCWYPMEIRPMKTSDSHLVRSWVTAGEVHAVPFGLVSMMIAMEVVLRRRQGPKQMLVGGVVLLGAMLVGQVTVLDLVKFVVAVGLHFHEINNGGDAMYMALIASFSIRPGLLMGFGLRTLWSPRERLVMAFGAAMVEIALGGMMGGLWQYLNAVSLCVLTINAISSRKASNMILPLMALMTPMTMHEVRMATMLFCTVVIIGVLHQNSKDTSMQKTIPIVALTLTSYMGLTQPFLGLCAYMSTQVFGRRSIPVNEALAAAGLVGVLAGLAFQDMENFLGPIAVGGILMMLVSVAGRVDGLELKKLGEISWEEEAEISGSSSRYDVALSEQGEFKLLSEDKVPWDQIVMTSLALVGAAIHPFALLLVLGGWILHIKGARRSGDVLWDIPTPKVIEECEHLEDGIYGIFQSTFLGASQRGVGVAQGGVFHTMWHVTRGAFLLRNGKKLVPSWASVKEDLVAYGGSWKLDGRWDGEEEVQLIAAVPGKSVVNVQTKPSLFRVKNGGEIGAVALDYPSGTSGSPIVNRNGEVVGLYGNGILVGDNSFVSAISQTELKEESKEELQEIPTMLKKGMTTILDFHPGAGKTRRFLPQILAECARRRLRTLVLAPTRVVLSEMKEAFQGLDVKFHTQAFSAHGSGKEVIDAMCHATLTYRMLEPTRVVNWEVIIMDEAHFLDPASIAARGWAAHRARANESATILMTATPPGTSDEFPHSNGEIEDVQTDIPSEPWTAGHEWILADKRPTAWFLPSIRAANVMAASLRKAGKNVVVLNRKTFEKEYPTIKQKKPDFILATDIAEMGANLCVERVLDCRTAYKPVLVDEGKKVAIKGPLRISASSAAQRRGRIGRNPNRDGDSYYYSEPTSEDNAHHVCWLEASMLLDNMEVRGGMVAPLYGIEGTKTPVSPGEMRLRDDQRRVFRELVRGCDLPVWLAWQVAKAGLKTNDRKWCFEGPEEHEILNDNGETVKCRSPGGAKRALRPRWCDERVSSDQSALADFIKFAEGRRGAAEMLVILTELPDFLAKKGGEAMDTISVFLHSEEGSRAYRNALSMMPEAMTIVMLFLLAGLLTSGAVIFFMSPKGMSRMSMAMGTMAGSGYLMFLGGVKPTHISYVMLIFFVLMVVVIPEPGQQRTIQDNQVAYLIIGILTLLSVVAANELGMLEKTKEDFFGKRDITTPSGAIPWSWPDLDLKPGAAWTVYVGIVTMLSPMLHHWIKVEYGNLSLSGIAQSASVLSFMDKGIPFMKMNISVVILLVSGWNSITVIPLLCGIGGAMLHWTLILPGIKAQQSKLAQKRVFHGVAKNPVVDGNPTADIEEAPEMPALYEKKLALYLLLALSLMSVAMCRTPFSLAEGIVLSSAALGPLIEGNTSLLWNGPMAVSMTGVMRGNYYAFVGVMYNLWKMKTERRGSASGKTLGEVWKRELNLLDKQQFEMYKRTDIIEVDRDMARRHLAEGKVDTGVAVSRGTAKLRWFHERGYVKLEGRVTDLGCGRGGWCYYAAAQKEVSGVKGYTLGRDGHEKPMNVQSLGWNIVTFKDKTDVHRLEPLKCETLLCDIGESSPSSATEGERTLRVLDTVEKWLACGVDNFCIKVLAPYMPDVIEKLELLQRRFGGTVIRNPLSRNSTHEMYYVSGARSNITFTVNQTSRLLMRRMRRPTGKVTLEADVILPIGTRSVETDKGPLDKDAIEERVERIKNEYATTWFYDNDNPYRTWHYCGSYVTKTSGSAASMINGVIKILTFPWDRIEEVTRMAMTDTTPFGQQRVFKEKVDTRAKDPPAGTRKIMKVVNRWLFRHLSREKNPRLCTKEEFIAKVRSHAAVGAFLEEQEQWKTANEAVQDPKFWEMVDAERKLHQQGRCQSCVYNMMGKREKKLSEFGKAKGSRAIWYMWLGARFLEFEALGFLNEDHWASRENSGGGVEGTGLQYLGYVIRDLSAKEGGGFYADDTAGWDTRITEADLDDEQEIMSYMSPEQRKLAWAIMEMTYKNKVVKVLRPAPGGKAFMDIISRRDQRGSGQVVTYALNTITNLKVQLIRMAEAEMVINHQHVQECGENVLERLETWLAENGCDRLSRMAVSGDDCVVRPVDDRFGLALSHLNAMSKVRKDISEWQPSKGWTDWENVPFCSHHFHELVLKDGRKIVVPCRDQDELIGRGRVSPGNGWMIKETACLSKAYANMWSLMYFHKRDMRLLSFAVSSAVPTAWVPSGRTTWSVHGRGEWMTTEDMLDVWNRVWVLNNPHMTDKTTIKEWRDVPYLTKRQDKLCGSLIGMTNRATWASHIHLVIHRIRTLIGQEKFTDYLTVMDRYSVDADLQPGELI.

The Cytoplasmic segment spans residues 1 to 104; sequence MSGRKAQGKT…LSSRKRRSNE (104 aa). The interval 38-72 is hydrophobic; homodimerization of capsid protein C; sequence PGPSRGVQGFIFFFLFNILTGKKLTAHLKKLWRML. Residues 102–121 constitute a propeptide, ER anchor for the capsid protein C, removed in mature form by serine protease NS3; that stretch reads SNEMALFPLLLLGLLALSGG. Residues 105-125 traverse the membrane as a helical segment; the sequence is MALFPLLLLGLLALSGGVTLV. Residues 126–244 are Extracellular-facing; sequence RKNRWLLLNV…GERQLQKIER (119 aa). Asparagine 134 and asparagine 150 each carry an N-linked (GlcNAc...) asparagine; by host glycan. A helical membrane pass occupies residues 245–265; sequence WLVRNPFFAVTALAIAYLVGN. At 266–270 the chain is on the cytoplasmic side; it reads NTTQR. A helical transmembrane segment spans residues 271–285; that stretch reads VVIALLVLAVGPAYS. The Extracellular portion of the chain corresponds to 286-730; sequence AHCIGITDRD…TVFGSAFQGL (445 aa). Cystine bridges form between cysteine 288/cysteine 315, cysteine 345/cysteine 401, cysteine 345/cysteine 406, cysteine 359/cysteine 390, cysteine 377/cysteine 401, cysteine 377/cysteine 406, cysteine 467/cysteine 568, and cysteine 585/cysteine 615. A fusion peptide region spans residues 383–396; sequence DRGWGNGCGLFGKG. The helical transmembrane segment at 731–751 threads the bilayer; that stretch reads FGGLSWITKVIMGAVLIWVGI. Topologically, residues 752–757 are extracellular; the sequence is NTRNMT. Residues 758–778 form a helical membrane-spanning segment; sequence MSMSMILVGVIMMFLSLGVGA. Residues 779–1132 lie on the Extracellular side of the membrane; the sequence is DQGCAVNFGK…LVRSWVTAGE (354 aa). Disulfide bonds link cysteine 782–cysteine 793, cysteine 833–cysteine 921, cysteine 957–cysteine 1002, cysteine 1058–cysteine 1107, cysteine 1069–cysteine 1091, and cysteine 1090–cysteine 1094. Residues asparagine 908 and asparagine 986 are each glycosylated (N-linked (GlcNAc...) asparagine; by host). A helical membrane pass occupies residues 1133–1153; that stretch reads VHAVPFGLVSMMIAMEVVLRR. Residues 1154–1201 are Cytoplasmic-facing; the sequence is RQGPKQMLVGGVVLLGAMLVGQVTVLDLVKFVVAVGLHFHEINNGGDA. A helical membrane pass occupies residues 1202–1222; it reads MYMALIASFSIRPGLLMGFGL. At 1223-1287 the chain is on the lumenal side; that stretch reads RTLWSPRERL…ILPLMALMTP (65 aa). The helical transmembrane segment at 1288–1308 threads the bilayer; sequence MTMHEVRMATMLFCTVVIIGV. At 1309–1355 the chain is on the cytoplasmic side; the sequence is LHQNSKDTSMQKTIPIVALTLTSYMGLTQPFLGLCAYMSTQVFGRRS. Residues 1356-1376 traverse the membrane as a helical segment; it reads IPVNEALAAAGLVGVLAGLAF. Residues 1377–1378 are Lumenal-facing; it reads QD. Residues 1379–1399 traverse the membrane as a helical segment; sequence MENFLGPIAVGGILMMLVSVA. Residues 1400–1456 lie on the Cytoplasmic side of the membrane; the sequence is GRVDGLELKKLGEISWEEEAEISGSSSRYDVALSEQGEFKLLSEDKVPWDQIVMTSL. Positions 1407 to 1446 are interacts with and activates NS3 protease; sequence LKKLGEISWEEEAEISGSSSRYDVALSEQGEFKLLSEDKV. The segment at residues 1457–1477 is an intramembrane region (helical); that stretch reads ALVGAAIHPFALLLVLGGWIL. The Cytoplasmic portion of the chain corresponds to 1478-2157; it reads HIKGARRSGD…RNALSMMPEA (680 aa). Positions 1485 to 1665 constitute a Peptidase S7 domain; sequence SGDVLWDIPT…ELKEESKEEL (181 aa). Catalysis depends on charge relay system; for serine protease NS3 activity residues histidine 1537, aspartate 1561, and serine 1622. One can recognise a Helicase ATP-binding domain in the interval 1669–1825; it reads PTMLKKGMTT…HSNGEIEDVQ (157 aa). The tract at residues 1673–1676 is important for RNA-binding; sequence KKGM. 1682–1689 provides a ligand contact to ATP; sequence FHPGAGKT. The DEAH box motif lies at 1773 to 1776; sequence DEAH. The Helicase C-terminal domain maps to 1836 to 1997; it reads GHEWILADKR…VRGGMVAPLY (162 aa). Lysine 1877 is modified (N6-acetyllysine; by host). A disordered region spans residues 1942–1963; that stretch reads AAQRRGRIGRNPNRDGDSYYYS. Residues 2158–2178 form a helical membrane-spanning segment; that stretch reads MTIVMLFLLAGLLTSGAVIFF. Over 2179–2186 the chain is Lumenal; the sequence is MSPKGMSR. Positions 2187–2207 form an intramembrane region, helical; that stretch reads MSMAMGTMAGSGYLMFLGGVK. At 2208 to 2209 the chain is on the lumenal side; the sequence is PT. The helical transmembrane segment at 2210–2230 threads the bilayer; that stretch reads HISYVMLIFFVLMVVVIPEPG. At 2231–2241 the chain is on the cytoplasmic side; it reads QQRTIQDNQVA. Residues 2242-2262 form a helical membrane-spanning segment; the sequence is YLIIGILTLLSVVAANELGML. The Lumenal portion of the chain corresponds to 2263 to 2293; sequence EKTKEDFFGKRDITTPSGAIPWSWPDLDLKP. An intramembrane region (helical) is located at residues 2294 to 2314; it reads GAAWTVYVGIVTMLSPMLHHW. Over 2315–2360 the chain is Lumenal; sequence IKVEYGNLSLSGIAQSASVLSFMDKGIPFMKMNISVVILLVSGWNS. A helical membrane pass occupies residues 2361–2380; it reads ITVIPLLCGIGGAMLHWTLI. The Cytoplasmic portion of the chain corresponds to 2381 to 2421; that stretch reads LPGIKAQQSKLAQKRVFHGVAKNPVVDGNPTADIEEAPEMP. The chain crosses the membrane as a helical span at residues 2422–2442; the sequence is ALYEKKLALYLLLALSLMSVA. Residues 2443–2445 are Lumenal-facing; sequence MCR. The helical transmembrane segment at 2446–2466 threads the bilayer; sequence TPFSLAEGIVLSSAALGPLIE. At 2467-3411 the chain is on the cytoplasmic side; that stretch reads GNTSLLWNGP…VDADLQPGEL (945 aa). The 265-residue stretch at 2508 to 2772 folds into the mRNA cap 0-1 NS5-type MT domain; that stretch reads GSASGKTLGE…DVILPIGTRS (265 aa). Residue serine 2563 coordinates S-adenosyl-L-methionine. Serine 2563 carries the phosphoserine modification. Lysine 2568 (for 2'-O-MTase activity) is an active-site residue. Glycine 2593, tryptophan 2594, threonine 2611, leucine 2612, aspartate 2638, and valine 2639 together coordinate S-adenosyl-L-methionine. Aspartate 2653 functions as the For 2'-O-MTase activity in the catalytic mechanism. Isoleucine 2654 contributes to the S-adenosyl-L-methionine binding site. Residues lysine 2689 and glutamate 2725 each act as for 2'-O-MTase activity in the active site. Tyrosine 2727 contacts S-adenosyl-L-methionine. Positions 2879–2912 match the Nuclear localization signal motif; that stretch reads RKIMKVVNRWLFRHLSREKNPRLCTKEEFIAKVR. Zn(2+) is bound by residues glutamate 2946, histidine 2950, cysteine 2955, and cysteine 2958. Residues 3036 to 3188 enclose the RdRp catalytic domain; the sequence is GGFYADDTAG…RPVDDRFGLA (153 aa). Residues histidine 3223, cysteine 3239, and cysteine 3358 each coordinate Zn(2+).

The protein in the N-terminal section; belongs to the class I-like SAM-binding methyltransferase superfamily. mRNA cap 0-1 NS5-type methyltransferase family. As to quaternary structure, homodimer. Interacts (via N-terminus) with host EXOC1 (via C-terminus); this interaction results in EXOC1 degradation through the proteasome degradation pathway. Forms heterodimers with envelope protein E in the endoplasmic reticulum and Golgi. In terms of assembly, homodimer; in the endoplasmic reticulum and Golgi. Interacts with protein prM. Interacts with non-structural protein 1. As to quaternary structure, homodimer; Homohexamer when secreted. Interacts with envelope protein E. Interacts (via N-terminus) with serine protease NS3. In terms of assembly, forms a heterodimer with serine protease NS3. May form homooligomers. As to quaternary structure, forms a heterodimer with NS2B. Interacts with non-structural protein 2A (via N-terminus). Interacts with NS4B. Interacts with unphosphorylated RNA-directed RNA polymerase NS5; this interaction stimulates RNA-directed RNA polymerase NS5 guanylyltransferase activity. NS3 interacts with host PDCD6IP; this interaction contributes to virion release. Interacts with serine protease NS3. In terms of assembly, homodimer. Interacts with host STAT2; this interaction prevents the establishment of cellular antiviral state. Interacts with serine protease NS3. Interacts with host TRIM23; this interaction leads to NS5 ubiquitination. Specific enzymatic cleavages in vivo yield mature proteins. The nascent capsid protein C contains a C-terminal hydrophobic domain that act as a signal sequence for translocation of prM into the lumen of the ER. Mature capsid protein C is cleaved at a site upstream of this hydrophobic domain by NS3. prM is cleaved in post-Golgi vesicles by a host furin, releasing the mature small envelope protein M, and peptide pr. Non-structural protein 2A-alpha, a C-terminally truncated form of non-structural protein 2A, results from partial cleavage by NS3. Specific enzymatic cleavages in vivo yield mature proteins peptide 2K acts as a signal sequence and is removed from the N-terminus of NS4B by the host signal peptidase in the ER lumen. Signal cleavage at the 2K-4B site requires a prior NS3 protease-mediated cleavage at the 4A-2K site. In terms of processing, cleaved in post-Golgi vesicles by a host furin, releasing the mature small envelope protein M, and peptide pr. This cleavage is incomplete as up to 30% of viral particles still carry uncleaved prM. Post-translationally, N-glycosylated. N-glycosylated. The excreted form is glycosylated and this is required for efficient secretion of the protein from infected cells. In terms of processing, polyubiquitinated; ubiquitination is probably mediated by host TRIM23 and is prerequisite for NS5-STAT2 interaction. NS5 is not ISGylated or sumoylated. Post-translationally, acetylated by host KAT5. Acetylation modulates NS3 RNA-binding and unwinding activities and plays an important positive role for viral replication. Phosphorylated on serines residues. This phosphorylation may trigger NS5 nuclear localization.

It is found in the virion. The protein resides in the host nucleus. It localises to the host cytoplasm. The protein localises to the host perinuclear region. Its subcellular location is the secreted. It is found in the virion membrane. The protein resides in the host endoplasmic reticulum membrane. The enzyme catalyses Selective hydrolysis of -Xaa-Xaa-|-Yaa- bonds in which each of the Xaa can be either Arg or Lys and Yaa can be either Ser or Ala.. It carries out the reaction RNA(n) + a ribonucleoside 5'-triphosphate = RNA(n+1) + diphosphate. The catalysed reaction is a ribonucleoside 5'-triphosphate + H2O = a ribonucleoside 5'-diphosphate + phosphate + H(+). It catalyses the reaction ATP + H2O = ADP + phosphate + H(+). The enzyme catalyses a 5'-end (5'-triphosphoguanosine)-ribonucleoside in mRNA + S-adenosyl-L-methionine = a 5'-end (N(7)-methyl 5'-triphosphoguanosine)-ribonucleoside in mRNA + S-adenosyl-L-homocysteine. It carries out the reaction a 5'-end (N(7)-methyl 5'-triphosphoguanosine)-ribonucleoside in mRNA + S-adenosyl-L-methionine = a 5'-end (N(7)-methyl 5'-triphosphoguanosine)-(2'-O-methyl-ribonucleoside) in mRNA + S-adenosyl-L-homocysteine + H(+). Functionally, plays a role in virus budding by binding to the cell membrane and gathering the viral RNA into a nucleocapsid that forms the core of a mature virus particle. During virus entry, may induce genome penetration into the host cytoplasm after hemifusion induced by the surface proteins. Can migrate to the cell nucleus where it modulates host functions. Inhibits RNA silencing by interfering with host Dicer. Its function is as follows. Prevents premature fusion activity of envelope proteins in trans-Golgi by binding to envelope protein E at pH6.0. After virion release in extracellular space, gets dissociated from E dimers. In terms of biological role, acts as a chaperone for envelope protein E during intracellular virion assembly by masking and inactivating envelope protein E fusion peptide. prM is the only viral peptide matured by host furin in the trans-Golgi network probably to avoid catastrophic activation of the viral fusion activity in acidic Golgi compartment prior to virion release. prM-E cleavage is inefficient, and many virions are only partially matured. These uncleaved prM would play a role in immune evasion. Functionally, may play a role in virus budding. Exerts cytotoxic effects by activating a mitochondrial apoptotic pathway through M ectodomain. May display a viroporin activity. Binds to host cell surface receptor and mediates fusion between viral and cellular membranes. Envelope protein is synthesized in the endoplasmic reticulum in the form of heterodimer with protein prM. They play a role in virion budding in the ER, and the newly formed immature particle is covered with 60 spikes composed of heterodimer between precursor prM and envelope protein E. The virion is transported to the Golgi apparatus where the low pH causes dissociation of PrM-E heterodimers and formation of E homodimers. prM-E cleavage is inefficient, and many virions are only partially matured. These uncleaved prM would play a role in immune evasion. Its function is as follows. Involved in immune evasion, pathogenesis and viral replication. Once cleaved off the polyprotein, is targeted to three destinations: the viral replication cycle, the plasma membrane and the extracellular compartment. Essential for viral replication. Required for formation of the replication complex and recruitment of other non-structural proteins to the ER-derived membrane structures. Excreted as a hexameric lipoparticle that plays a role against host immune response. Antagonizing the complement function. Binds to the host macrophages and dendritic cells. Inhibits signal transduction originating from Toll-like receptor 3 (TLR3). In terms of biological role, component of the viral RNA replication complex that functions in virion assembly and antagonizes the host immune response. Functionally, required cofactor for the serine protease function of NS3. May have membrane-destabilizing activity and form viroporins. Displays three enzymatic activities: serine protease, NTPase and RNA helicase. NS3 serine protease, in association with NS2B, performs its autocleavage and cleaves the polyprotein at dibasic sites in the cytoplasm: C-prM, NS2A-NS2B, NS2B-NS3, NS3-NS4A, NS4A-2K and NS4B-NS5. NS3 RNA helicase binds RNA and unwinds dsRNA in the 3' to 5' direction. Also plays a role in virus assembly. Its function is as follows. Regulates the ATPase activity of the NS3 helicase activity. NS4A allows NS3 helicase to conserve energy during unwinding. In terms of biological role, functions as a signal peptide for NS4B and is required for the interferon antagonism activity of the latter. Functionally, induces the formation of ER-derived membrane vesicles where the viral replication takes place. Inhibits interferon (IFN)-induced host STAT1 phosphorylation and nuclear translocation, thereby preventing the establishment of cellular antiviral state by blocking the IFN-alpha/beta pathway. Replicates the viral (+) and (-) RNA genome, and performs the capping of genomes in the cytoplasm. NS5 methylates viral RNA cap at guanine N-7 and ribose 2'-O positions. Besides its role in RNA genome replication, also prevents the establishment of cellular antiviral state by blocking the interferon-alpha/beta (IFN-alpha/beta) signaling pathway. IFN-I induces binding of NS5 to host IFN-activated transcription factor STAT2, preventing its transcriptional activity. Host TRIM23 is the E3 ligase that interacts with and polyubiquitinates NS5 to promote its binding to STAT2 and trigger IFN-I signaling inhibition. The chain is Genome polyprotein from Aedes aegypti (Yellowfever mosquito).